The following is a 448-amino-acid chain: Hydroxycinnamoyl-CoA:piscidic acid hydroxycinnamoyltransferase (448 aa).

Catalysis depends on proton acceptor residues H153 and D395.

The protein belongs to the plant acyltransferase family. As to expression, highly expressed in root and rhizome. Expressed in senescent leaf and callus tissues. Expressed in detached leaf treated for 18 hours with ethephon, methyl jasmonate, salicylic acid or illuminated for 24 hours with UV light. Not expressed in mature leaf. Expressed at low levels in leaves and flowers.

The enzyme catalyses (2R,3S)-piscidate + (E)-4-coumaroyl-CoA = cimicifugate K + CoA. The catalysed reaction is (2R,3S)-piscidate + (E)-caffeoyl-CoA = cimicifugate D + CoA. It catalyses the reaction (2R,3S)-piscidate + (E)-sinapoyl-CoA = cimicifugate J + CoA. It carries out the reaction (2R,3S)-piscidate + (E)-feruloyl-CoA = cimicifugate E + CoA. The protein operates within phenylpropanoid metabolism. Its function is as follows. Catalyzes the formation of cimicifugic acids. Uses hydroxycinnamoyl-CoA thioesters as hydroxycinnamoyl donor substrates. Has a strict specificity for piscidic acid as an acceptor substrate as none of the various other acceptors tested including 4-hydroxyphenyllactic acid, malate, spermidine or tetrahydroxyhexanedioic acid are substrates. Donor substrates include 4-coumaroyl-CoA, caffeoyl-CoA, sinapoyl-CoA and feruloyl-CoA. No activity with cinnamoyl-CoA, isoferuloyl-CoA, 3,4-dimethoxycinnamoyl-CoA or 3,4-dihydroxybenzoyl-CoA as donors. In the reverse reaction with fukinolic acid and CoA as substrates, a formation of fukiic acid is evident. Hence, fukiic acid may also serve as an acceptor substrate. Involved in the biosynthesis of cimicifugic and possibly fukinolic acids. In Actaea racemosa (Black cohosh), this protein is Hydroxycinnamoyl-CoA:piscidic acid hydroxycinnamoyltransferase.